Consider the following 33-residue polypeptide: Brevinin 2AV (33 aa).

A disulfide bridge links Cys-27 with Cys-33.

As to expression, expressed by the skin glands.

The protein localises to the secreted. Functionally, has antibacterial activity. The chain is Brevinin 2AV from Rana arvalis (Moor frog).